Reading from the N-terminus, the 190-residue chain is Lipid A acyltransferase PagP (190 aa).

An N-terminal signal peptide occupies residues 1–18 (MKRLISCLTIICALNASA). Catalysis depends on residues His60, Asp103, and Ser104.

Belongs to the lipid A palmitoyltransferase family. In terms of assembly, homodimer.

The protein localises to the cell outer membrane. The catalysed reaction is a lipid A + a 1,2-diacyl-sn-glycero-3-phosphocholine = a hepta-acyl lipid A + a 2-acyl-sn-glycero-3-phosphocholine. It catalyses the reaction a lipid IVA + a 1,2-diacyl-sn-glycero-3-phosphocholine = a lipid IVB + a 2-acyl-sn-glycero-3-phosphocholine. The enzyme catalyses a lipid IIA + a 1,2-diacyl-sn-glycero-3-phosphocholine = a lipid IIB + a 2-acyl-sn-glycero-3-phosphocholine. Transfers a fatty acid residue from the sn-1 position of a phospholipid to the N-linked hydroxyfatty acid chain on the proximal unit of lipid A or its precursors. This chain is Lipid A acyltransferase PagP, found in Legionella pneumophila (strain Paris).